We begin with the raw amino-acid sequence, 177 residues long: uncharacterized protein (177 aa).

The signal sequence occupies residues 1 to 22 (MCGVVVVIVALVPADPLLPAFA). 3 consecutive transmembrane segments (helical) span residues 31-51 (VFIPFFNISSSIILICSTCVF), 94-114 (ISLMPSFLFPFATLLCLLKFV), and 136-156 (LFPIMLIPPPFLTSSSFLLEI).

It is found in the membrane. This is an uncharacterized protein from Saccharomyces cerevisiae (strain ATCC 204508 / S288c) (Baker's yeast).